Consider the following 248-residue polypeptide: MLYLHDVWVNWFEGEENGYNVCHFYEWRKDDTIELLDQVPLLKVDATLYHYIENELLELPQKMLKTYIIRLIFVKIMNVCSKSIALLLQNGKGIIAIDTIGYNVPIRKSRLIPRQEQMVYEMVENVQAEKYEFQVEETEKEHHILSPSPFIMNGLTRKERQLKQLLFMALDQLHTTKNTAEIRYWFTEWDPSAYGMVQHMEFEDIWAKLYDEAKTGWSDKHEQLCERLVKGQPFFEKLWEMENEQKVN.

This sequence belongs to the UPF0736 family.

The polypeptide is UPF0736 protein BC_1176 (Bacillus cereus (strain ATCC 14579 / DSM 31 / CCUG 7414 / JCM 2152 / NBRC 15305 / NCIMB 9373 / NCTC 2599 / NRRL B-3711)).